The chain runs to 307 residues: tRNA dimethylallyltransferase (307 aa).

8–15 (GPTGSGKS) contacts ATP. Position 10-15 (10-15 (TGSGKS)) interacts with substrate. Positions 33–36 (DSLQ) are interaction with substrate tRNA.

Belongs to the IPP transferase family. In terms of assembly, monomer. It depends on Mg(2+) as a cofactor.

It carries out the reaction adenosine(37) in tRNA + dimethylallyl diphosphate = N(6)-dimethylallyladenosine(37) in tRNA + diphosphate. In terms of biological role, catalyzes the transfer of a dimethylallyl group onto the adenine at position 37 in tRNAs that read codons beginning with uridine, leading to the formation of N6-(dimethylallyl)adenosine (i(6)A). The chain is tRNA dimethylallyltransferase from Solibacter usitatus (strain Ellin6076).